The following is a 612-amino-acid chain: UvrABC system protein C (612 aa).

A GIY-YIG domain is found at 20-98 (THSGVYRMLD…IKQHRPKYNI (79 aa)). Residues 208 to 243 (STVLEEISAKMYQASEDMEYEKAQVYRDQLVVLRKL) form the UVR domain.

The protein belongs to the UvrC family. As to quaternary structure, interacts with UvrB in an incision complex.

The protein resides in the cytoplasm. In terms of biological role, the UvrABC repair system catalyzes the recognition and processing of DNA lesions. UvrC both incises the 5' and 3' sides of the lesion. The N-terminal half is responsible for the 3' incision and the C-terminal half is responsible for the 5' incision. In Francisella tularensis subsp. novicida (strain U112), this protein is UvrABC system protein C.